The following is a 77-amino-acid chain: Translation initiation factor IF-1, chloroplastic (77 aa).

The 71-residue stretch at 1–71 (MKEQKWIHEG…TRGRIIYRLR (71 aa)) folds into the S1-like domain.

This sequence belongs to the IF-1 family. In terms of assembly, component of the 30S ribosomal translation pre-initiation complex which assembles on the 30S ribosome in the order IF-2 and IF-3, IF-1 and N-formylmethionyl-tRNA(fMet); mRNA recruitment can occur at any time during PIC assembly.

The protein resides in the plastid. It localises to the chloroplast. Its function is as follows. One of the essential components for the initiation of protein synthesis. Stabilizes the binding of IF-2 and IF-3 on the 30S subunit to which N-formylmethionyl-tRNA(fMet) subsequently binds. Helps modulate mRNA selection, yielding the 30S pre-initiation complex (PIC). Upon addition of the 50S ribosomal subunit IF-1, IF-2 and IF-3 are released leaving the mature 70S translation initiation complex. The protein is Translation initiation factor IF-1, chloroplastic of Lactuca sativa (Garden lettuce).